A 1481-amino-acid chain; its full sequence is DNA-directed RNA polymerase subunit beta'' (1481 aa).

Residues cysteine 217, cysteine 291, cysteine 298, and cysteine 301 each contribute to the Zn(2+) site.

This sequence belongs to the RNA polymerase beta' chain family. RpoC2 subfamily. In terms of assembly, in plastids the minimal PEP RNA polymerase catalytic core is composed of four subunits: alpha, beta, beta', and beta''. When a (nuclear-encoded) sigma factor is associated with the core the holoenzyme is formed, which can initiate transcription. Zn(2+) serves as cofactor.

It localises to the plastid. The protein resides in the chloroplast. It carries out the reaction RNA(n) + a ribonucleoside 5'-triphosphate = RNA(n+1) + diphosphate. DNA-dependent RNA polymerase catalyzes the transcription of DNA into RNA using the four ribonucleoside triphosphates as substrates. This chain is DNA-directed RNA polymerase subunit beta'', found in Trieres chinensis (Marine centric diatom).